The chain runs to 432 residues: Probable protein phosphatase 2C 75 (432 aa).

Residues V44–L356 enclose the PPM-type phosphatase domain. Residues D80, G81, D301, and D347 each contribute to the Mn(2+) site. Residues S372–S408 form a disordered region.

It belongs to the PP2C family. Mg(2+) is required as a cofactor. It depends on Mn(2+) as a cofactor.

It catalyses the reaction O-phospho-L-seryl-[protein] + H2O = L-seryl-[protein] + phosphate. It carries out the reaction O-phospho-L-threonyl-[protein] + H2O = L-threonyl-[protein] + phosphate. This chain is Probable protein phosphatase 2C 75, found in Oryza sativa subsp. japonica (Rice).